Here is a 185-residue protein sequence, read N- to C-terminus: Large ribosomal subunit protein uL5 (185 aa).

This sequence belongs to the universal ribosomal protein uL5 family. Part of the 50S ribosomal subunit; part of the 5S rRNA/L5/L18/L25 subcomplex. Contacts the 5S rRNA and the P site tRNA. Forms a bridge to the 30S subunit in the 70S ribosome.

In terms of biological role, this is one of the proteins that bind and probably mediate the attachment of the 5S RNA into the large ribosomal subunit, where it forms part of the central protuberance. In the 70S ribosome it contacts protein S13 of the 30S subunit (bridge B1b), connecting the 2 subunits; this bridge is implicated in subunit movement. Contacts the P site tRNA; the 5S rRNA and some of its associated proteins might help stabilize positioning of ribosome-bound tRNAs. The protein is Large ribosomal subunit protein uL5 of Rhizobium leguminosarum bv. trifolii (strain WSM2304).